The following is a 279-amino-acid chain: Large ribosomal subunit protein uL2 (279 aa).

A disordered region spans residues 223-279 (PVAMNPVDHPMGGGEGRASGGHPRSRKGLPAKGFKTRSRTKASNKYIVERRKTRKKK). Over residues 245 to 264 (PRSRKGLPAKGFKTRSRTKA) the composition is skewed to basic residues.

Belongs to the universal ribosomal protein uL2 family. In terms of assembly, part of the 50S ribosomal subunit. Forms a bridge to the 30S subunit in the 70S ribosome.

One of the primary rRNA binding proteins. Required for association of the 30S and 50S subunits to form the 70S ribosome, for tRNA binding and peptide bond formation. It has been suggested to have peptidyltransferase activity; this is somewhat controversial. Makes several contacts with the 16S rRNA in the 70S ribosome. The polypeptide is Large ribosomal subunit protein uL2 (Christiangramia forsetii (strain DSM 17595 / CGMCC 1.15422 / KT0803) (Gramella forsetii)).